The sequence spans 71 residues: uncharacterized protein (71 aa).

A helical membrane pass occupies residues 12-34 (YLYNYFSSTTSWLVFIILSLDTI).

Its subcellular location is the membrane. This is an uncharacterized protein from Schizosaccharomyces pombe (strain 972 / ATCC 24843) (Fission yeast).